The following is a 1284-amino-acid chain: ABC multidrug transporter atrC (1284 aa).

Over residues 1–11 (MKSTAESKETP) the composition is skewed to basic and acidic residues. Positions 1-24 (MKSTAESKETPSQDESTTSVPCTE) are disordered. 6 helical membrane-spanning segments follow: residues 55-75 (AVAI…NLIF), 99-119 (AAEL…LSYT), 178-198 (IGLL…AFVV), 203-223 (TLIC…VAAV), 282-302 (LLGL…GLAF), and 320-340 (IFTV…LAPY). One can recognise an ABC transmembrane type-1 1 domain in the interval 55–346 (AVAILAACAS…LAPYSIEFSR (292 aa)). An ABC transporter 1 domain is found at 381-626 (VELENVTFSY…DGVYAGLVKI (246 aa)). Asn385 and Asn401 each carry an N-linked (GlcNAc...) asparagine glycan. 416-423 (GQSGSGKS) is an ATP binding site. Asn488 and Asn632 each carry an N-linked (GlcNAc...) asparagine glycan. A run of 2 helical transmembrane segments spans residues 705–725 (LVVL…AILM) and 745–765 (FYAS…LAVG). The region spanning 705–992 (LVVLLGCLGG…LFQWSTSITK (288 aa)) is the ABC transmembrane type-1 2 domain. Asn800 carries N-linked (GlcNAc...) asparagine glycosylation. A run of 4 helical transmembrane segments spans residues 824–844 (IALV…AIAF), 846–866 (WKLG…AGMV), 931–951 (MICF…GFWY), and 955–975 (LVSL…SVFF). Residue Asn995 is glycosylated (N-linked (GlcNAc...) asparagine). In terms of domain architecture, ABC transporter 2 spans 1027 to 1280 (IAMDNVRFSY…GGLYRRMCEA (254 aa)). Residue 1062-1069 (GSSGCGKS) participates in ATP binding. Residue Asn1122 is glycosylated (N-linked (GlcNAc...) asparagine).

It belongs to the ABC transporter superfamily. ABCB family. Multidrug resistance exporter (TC 3.A.1.201) subfamily.

The protein localises to the cell membrane. Functionally, pleiotropic ABC efflux transporter involved in the protection of the cells against a wide range of toxic compounds. This Emericella nidulans (strain FGSC A4 / ATCC 38163 / CBS 112.46 / NRRL 194 / M139) (Aspergillus nidulans) protein is ABC multidrug transporter atrC.